Here is a 611-residue protein sequence, read N- to C-terminus: Phosphomethylpyrimidine synthase (611 aa).

Substrate-binding positions include Asn212, Met241, Tyr270, His306, 326–328 (SRG), 367–370 (DGLR), and Glu406. His410 is a Zn(2+) binding site. Residue Tyr433 coordinates substrate. His474 lines the Zn(2+) pocket. Cys554, Cys557, and Cys562 together coordinate [4Fe-4S] cluster.

The protein belongs to the ThiC family. Homodimer. It depends on [4Fe-4S] cluster as a cofactor.

The catalysed reaction is 5-amino-1-(5-phospho-beta-D-ribosyl)imidazole + S-adenosyl-L-methionine = 4-amino-2-methyl-5-(phosphooxymethyl)pyrimidine + CO + 5'-deoxyadenosine + formate + L-methionine + 3 H(+). It functions in the pathway cofactor biosynthesis; thiamine diphosphate biosynthesis. Functionally, catalyzes the synthesis of the hydroxymethylpyrimidine phosphate (HMP-P) moiety of thiamine from aminoimidazole ribotide (AIR) in a radical S-adenosyl-L-methionine (SAM)-dependent reaction. This is Phosphomethylpyrimidine synthase from Bartonella bacilliformis (strain ATCC 35685 / KC583 / Herrer 020/F12,63).